The sequence spans 228 residues: MADS-box transcription factor 22 (228 aa).

One can recognise an MADS-box domain in the interval 1 to 61 (MARERREIKR…GKLSHFASSS (61 aa)). Positions 86–176 (LNLEHSKYAH…RNQVSQISPA (91 aa)) constitute a K-box domain. Residues 189–217 (EGQSSESVMTALHSGSSQSQDNDDGSDVS) form a disordered region.

In terms of tissue distribution, expressed in palea and stamen primordia. Expressed in shoots and coleoptiles.

The protein localises to the nucleus. Its function is as follows. Probable transcription factor. May be required for spikelet (rice flower) development. Transcription factor that functions to support the MADS55 in its function as negative regulator of brassinosteroid signaling. This Oryza sativa subsp. japonica (Rice) protein is MADS-box transcription factor 22 (MADS22).